The chain runs to 1305 residues: Myosin-IIIb (1305 aa).

A Protein kinase domain is found at 15-281; sequence WEIIETIGKG…VTHLLDHPFI (267 aa). Residues 21 to 29 and Lys-44 each bind ATP; that span reads IGKGTYGKV. The active-site Proton acceptor is Asp-144. Positions 331 to 1046 constitute a Myosin motor domain; that stretch reads CLEDDLVNLE…HVEQLNLLLR (716 aa). The actin-binding stretch occupies residues 927–949; the sequence is LMDLLSKMVVGQPHFIRCIKPND. 2 consecutive IQ domains span residues 1048-1077 and 1075-1104; these read VMGRVVMLQAYTKGWLGARRYKRAKEKREK and REKGAITIQSAWRGYDARRKLKQRSRRRSE. 2 disordered regions span residues 1093–1164 and 1200–1233; these read RKLK…VTSG and SPCEDSLKPGSEEGLSQKQRAPRRRCQQPKMLSS.

In the C-terminal section; belongs to the TRAFAC class myosin-kinesin ATPase superfamily. Myosin family. It in the N-terminal section; belongs to the protein kinase superfamily. STE Ser/Thr protein kinase family. As to quaternary structure, interacts (via C-terminus) with ESPN. Interacts (via C-terminus) with ESPNL. In terms of tissue distribution, expressed in the cochlear hair cells (at protein level). Expressed in utricle hair bundles (at protein level).

It is found in the cytoplasm. The protein resides in the cytoskeleton. It localises to the cell projection. The protein localises to the stereocilium. It catalyses the reaction L-seryl-[protein] + ATP = O-phospho-L-seryl-[protein] + ADP + H(+). The catalysed reaction is L-threonyl-[protein] + ATP = O-phospho-L-threonyl-[protein] + ADP + H(+). Its function is as follows. Probable actin-based motor with a protein kinase activity. Required for normal cochlear hair bundle development and hearing. Plays an important role in the early steps of cochlear hair bundle morphogenesis. Influences the number and lengths of stereocilia to be produced and limits the growth of microvilli within the forming auditory hair bundles thereby contributing to the architecture of the hair bundle, including its staircase pattern. Involved in the elongation of actin in stereocilia tips by transporting the actin regulatory factor ESPN to the plus ends of actin filaments. The protein is Myosin-IIIb (Myo3b) of Mus musculus (Mouse).